The following is a 224-amino-acid chain: Acyl-protein thioesterase 1 (224 aa).

Catalysis depends on charge relay system residues Ser-116, Asp-170, and His-203.

It belongs to the AB hydrolase superfamily. AB hydrolase 2 family.

The protein localises to the cytoplasm. It is found in the nucleus. The enzyme catalyses S-hexadecanoyl-L-cysteinyl-[protein] + H2O = L-cysteinyl-[protein] + hexadecanoate + H(+). In terms of biological role, hydrolyzes fatty acids from S-acylated cysteine residues in proteins with a strong preference for palmitoylated G-alpha proteins over other acyl substrates. Mediates the deacylation of G-alpha proteins such as GPA1 in vivo, but has weak or no activity toward palmitoylated Ras proteins. Has weak lysophospholipase activity in vitro; however such activity may not exist in vivo. The protein is Acyl-protein thioesterase 1 of Schizosaccharomyces pombe (strain 972 / ATCC 24843) (Fission yeast).